Here is a 469-residue protein sequence, read N- to C-terminus: UDP-N-acetylmuramate--L-alanine ligase (469 aa).

G123–T129 provides a ligand contact to ATP.

This sequence belongs to the MurCDEF family.

Its subcellular location is the cytoplasm. The catalysed reaction is UDP-N-acetyl-alpha-D-muramate + L-alanine + ATP = UDP-N-acetyl-alpha-D-muramoyl-L-alanine + ADP + phosphate + H(+). The protein operates within cell wall biogenesis; peptidoglycan biosynthesis. In terms of biological role, cell wall formation. The sequence is that of UDP-N-acetylmuramate--L-alanine ligase from Synechococcus sp. (strain CC9605).